Consider the following 882-residue polypeptide: Valine--tRNA ligase (882 aa).

The short motif at 52 to 62 is the 'HIGH' region element; the sequence is PNVTGSLHMGH. The short motif at 539–543 is the 'KMSKS' region element; the sequence is KMSKS. Residue lysine 542 coordinates ATP. Residues 816-882 are a coiled coil; that stretch reads IDVAAERRRL…RINARLAVLQ (67 aa).

It belongs to the class-I aminoacyl-tRNA synthetase family. ValS type 1 subfamily. As to quaternary structure, monomer.

It is found in the cytoplasm. The catalysed reaction is tRNA(Val) + L-valine + ATP = L-valyl-tRNA(Val) + AMP + diphosphate. Its function is as follows. Catalyzes the attachment of valine to tRNA(Val). As ValRS can inadvertently accommodate and process structurally similar amino acids such as threonine, to avoid such errors, it has a 'posttransfer' editing activity that hydrolyzes mischarged Thr-tRNA(Val) in a tRNA-dependent manner. The protein is Valine--tRNA ligase of Mycolicibacterium paratuberculosis (strain ATCC BAA-968 / K-10) (Mycobacterium paratuberculosis).